Consider the following 343-residue polypeptide: 2-alkenal reductase (NADP(+)-dependent) (343 aa).

Substrate is bound by residues Tyr-55 and Tyr-80. NADP(+)-binding positions include 165–166 (AV), Gly-186, Lys-190, Tyr-206, Asn-230, Cys-252, Tyr-258, 282–284 (FLV), and Asn-332.

This sequence belongs to the NADP-dependent oxidoreductase L4BD family. In terms of assembly, homodimer.

It catalyses the reaction an n-alkanal + NADP(+) = an alk-2-enal + NADPH + H(+). Its function is as follows. Reduces the C=C double bonds of alpha, beta unsaturated enones, but has no activity on enones with an endocyclic C=C double-bond. Shows a high specificity for NADPH as the hybrid donor. Substrates are 1-nitrocyclohexene, 2-methylpentenal, trans-cinnamaldehyde, methyl-trans-2-methylcinnamaldehyde, trans-2-nonenal and 1-octen-3-one. Reduced activity with aplha-methyl transcinnamaldehyde, 1-cyclohexene-1-carboxaldehyde, methyl crotonate, (R)-pulegone, and dimethyl itaconate and no activity with maleimides, citral, (5R)- or (5S)-carvone, (S)-perillyl alcohol, and substituted cyclohexenones and cyclopentenones. May also act as a allyl-alcohol dehydrogenase by catalyzing the dehydrogenation of secondary allylic alcohols rather than saturated secondary alcohols. Allyl-alcohol dehydrogenase is specific for the S-stereoisomer of the alcohols. The chain is 2-alkenal reductase (NADP(+)-dependent) (DBR) from Nicotiana tabacum (Common tobacco).